A 416-amino-acid chain; its full sequence is Tyrosine aminotransferase (416 aa).

Lysine 253 carries the post-translational modification N6-(pyridoxal phosphate)lysine.

Belongs to the class-I pyridoxal-phosphate-dependent aminotransferase family. In terms of assembly, homodimer. The cofactor is pyridoxal 5'-phosphate. The N-terminus is blocked.

It localises to the cytoplasm. The protein resides in the mitochondrion. It carries out the reaction L-tyrosine + 2-oxoglutarate = 3-(4-hydroxyphenyl)pyruvate + L-glutamate. It participates in amino-acid degradation; L-phenylalanine degradation; acetoacetate and fumarate from L-phenylalanine: step 2/6. Its function is as follows. Transaminase involved in tyrosine breakdown. Converts tyrosine to p-hydroxyphenylpyruvate. In Trypanosoma cruzi, this protein is Tyrosine aminotransferase.